Here is an 831-residue protein sequence, read N- to C-terminus: MLTIQFLCPLPNGLHARPAWELKEQCSQWQSEITFINHRQNAKADAKSSLALIGTGTLFNDSCSLNISGSDEEQARRVLEEYIQVRFIDSDSVQPTLAELTAHPLPRSLSRLNPDLLYGNVLASGVGVGTLTLLQSDSLDSYRVIPASAQDSTLLEHSLATLAEQLNQQLRERDGESKTILSAHLSLIQDDEFAGNIRHLMAEQHQGLGAAIISNMEQICAKLSASASDYLRERVSDIRDISEQLLHITWPELKPRNNLVLEKPTILVAEDLTPSQFLSLDLKNLAGMILEKTGRTSHTLILARASAIPVLSGLPLDAIARYAGQPAVLDAQCGVLAINPNDAVSGYYQVAQTLADKRQKQQAQAAAQLAYSRDKKRIDIAANIGTALEAPGAFANGAEGVGLFRTEMLYMDRDSAPDEQEQFEAYQQVLLAAGDKPIIFRTMDIGGDKSIPYLNIPQEENPFLGYRAVRIYPEFAGLFRTQLRAILRAASFGNAQLMIPMVHSLDQILWVKGELQKAIVELKRDGLRHAETITLGIMVEVPSVCYIIDHFCDEVDFFSIGSNDMTQYLYAVDRNNPRVSPLYNPITPSFLRMLQQIVTAAHQRGKWVGICGELGGESRYLPLLLGLGLDELSMSSPRIPAVKSQLRQLDSEACRELARQACECRSAQEIEALLTAFTPEEDVRPLLALENIFVDQSFSNKEQAIQFLCGNLGVNGRTEHPFELEEDVWQREEIVTTGVGFGVAIPHTKSQWIRHSSISIARLVKPVDWQSEMGEVELVIMLTLGANEGMNHVKVFSQLARKLVNKNFRQSLFAAQDAQSILTLLETELTF.

Residues 1 to 90 (MLTIQFLCPL…EYIQVRFIDS (90 aa)) enclose the HPr domain. Catalysis depends on H15, which acts as the Pros-phosphohistidine intermediate; for HPr activity. At H15 the chain carries Phosphohistidine; by EI. A PTS EI region spans residues 119 to 650 (GNVLASGVGV…AVKSQLRQLD (532 aa)). The Tele-phosphohistidine intermediate; for PTS EI activity role is filled by H298. Residue H298 is modified to Phosphohistidine; by autocatalysis. Phosphoenolpyruvate contacts are provided by R405 and R441. Mg(2+) is bound by residues E540 and D564. Phosphoenolpyruvate-binding positions include 563–564 (ND) and R574. The Proton donor; for EI activity role is filled by C611. One can recognise a PTS EIIA type-2 domain in the interval 685-828 (PLLALENIFV…QSILTLLETE (144 aa)). H747 (tele-phosphohistidine intermediate; for PTS EIIA activity) is an active-site residue. Phosphohistidine; by HPr is present on H747.

Belongs to the PEP-utilizing enzyme family. It depends on Mg(2+) as a cofactor.

It localises to the cytoplasm. The enzyme catalyses L-histidyl-[protein] + phosphoenolpyruvate = N(pros)-phospho-L-histidyl-[protein] + pyruvate. It carries out the reaction D-fructose(out) + N(pros)-phospho-L-histidyl-[protein] = D-fructose 1-phosphate(in) + L-histidyl-[protein]. Multifunctional protein that includes general (non sugar-specific) and sugar-specific components of the phosphoenolpyruvate-dependent sugar phosphotransferase system (sugar PTS). This major carbohydrate active transport system catalyzes the phosphorylation of incoming sugar substrates concomitantly with their translocation across the cell membrane. The enzyme II FryABC PTS system is involved in fructose transport. The sequence is that of Multiphosphoryl transfer protein (fryA) from Escherichia coli O6:H1 (strain CFT073 / ATCC 700928 / UPEC).